The primary structure comprises 196 residues: PSGKQYECPECGKTFKYKNSLTIHQRGHTEEKPFMCTQCGKCFRQKKALRRHQFIHTGEKPYVCTECEKRFLEKSQLILHQRGHTGEKPFTCTECGESFRHKQVLMRHQFIHTGEKPYECTQCGEGFLLKSKLIHHQRGHTGEKPFMCTECGKGFRQKQVLIEHQFIHTGEKPLMCTDCGKHFRQKHVLRLHKLSH.

C2H2-type zinc fingers lie at residues tyrosine 6 to histidine 28, phenylalanine 34 to histidine 56, tyrosine 62 to histidine 84, phenylalanine 90 to histidine 112, tyrosine 118 to histidine 140, phenylalanine 146 to histidine 168, and leucine 174 to histidine 196.

The protein belongs to the krueppel C2H2-type zinc-finger protein family.

The protein resides in the nucleus. In terms of biological role, may be involved in transcriptional regulation. This is Gastrula zinc finger protein XlCGF64.1 from Xenopus laevis (African clawed frog).